The chain runs to 1132 residues: APC membrane recruitment protein 1 (1132 aa).

The residue at position 1 (methionine 1) is an N-acetylmethionine. Residues methionine 1–glutamine 21 are compositionally biased toward polar residues. Disordered stretches follow at residues methionine 1–asparagine 256, phenylalanine 268–asparagine 301, serine 338–asparagine 423, glycine 469–glutamate 505, threonine 674–tryptophan 699, methionine 736–threonine 770, glutamate 924–leucine 949, and serine 1038–lysine 1132. Basic and acidic residues predominate over residues glycine 24–glutamate 35. Positions serine 121–alanine 133 are enriched in low complexity. 3 stretches are compositionally biased toward basic and acidic residues: residues lysine 195 to valine 208, glutamate 218 to lysine 229, and glutamate 281 to glycine 290. Residues alanine 372 to asparagine 423 are compositionally biased toward acidic residues. 2 stretches are compositionally biased toward polar residues: residues threonine 475–asparagine 486 and glycine 677–glutamate 696. Composition is skewed to acidic residues over residues glutamate 756 to lysine 765 and aspartate 931 to glycine 941. Composition is skewed to polar residues over residues serine 1059 to alanine 1072 and alanine 1115 to lysine 1132.

The protein belongs to the Amer family. In terms of assembly, interacts with CTNNB1, AXIN1, LRP6, KEAP1, APC and BTRC. Interacts with SCF (SKP1-CUL1-F-box protein) E3 ubiquitin-protein ligase complexes containing BTRC and/or FBXW11. Identified in the beta-catenin destruction complex containing CTNNB1, APC, AXIN1 and AXIN2. Interacts with WT1. In terms of tissue distribution, expressed in kidney.

The protein resides in the cytoplasm. Its subcellular location is the cell membrane. It localises to the nucleus. Regulator of the canonical Wnt signaling pathway. Acts by specifically binding phosphatidylinositol 4,5-bisphosphate (PtdIns(4,5)P2), translocating to the cell membrane and interacting with key regulators of the canonical Wnt signaling pathway, such as components of the beta-catenin destruction complex. Acts both as a positive and negative regulator of the Wnt signaling pathway, depending on the context: acts as a positive regulator by promoting LRP6 phosphorylation. Also acts as a negative regulator by acting as a scaffold protein for the beta-catenin destruction complex and promoting stabilization of Axin at the cell membrane. Promotes CTNNB1 ubiquitination and degradation. Involved in kidney development. The polypeptide is APC membrane recruitment protein 1 (Amer1) (Mus musculus (Mouse)).